Consider the following 103-residue polypeptide: Large ribosomal subunit protein uL23 (103 aa).

It belongs to the universal ribosomal protein uL23 family. Part of the 50S ribosomal subunit. Contacts protein L29, and trigger factor when it is bound to the ribosome.

In terms of biological role, one of the early assembly proteins it binds 23S rRNA. One of the proteins that surrounds the polypeptide exit tunnel on the outside of the ribosome. Forms the main docking site for trigger factor binding to the ribosome. This chain is Large ribosomal subunit protein uL23, found in Zymomonas mobilis subsp. mobilis (strain ATCC 31821 / ZM4 / CP4).